The primary structure comprises 363 residues: UDP-N-acetylglucosamine--N-acetylmuramyl-(pentapeptide) pyrophosphoryl-undecaprenol N-acetylglucosamine transferase (363 aa).

UDP-N-acetyl-alpha-D-glucosamine-binding positions include threonine 12 to glycine 14, arginine 166, serine 196, and glutamine 291.

It belongs to the glycosyltransferase 28 family. MurG subfamily.

Its subcellular location is the cell inner membrane. It carries out the reaction di-trans,octa-cis-undecaprenyl diphospho-N-acetyl-alpha-D-muramoyl-L-alanyl-D-glutamyl-meso-2,6-diaminopimeloyl-D-alanyl-D-alanine + UDP-N-acetyl-alpha-D-glucosamine = di-trans,octa-cis-undecaprenyl diphospho-[N-acetyl-alpha-D-glucosaminyl-(1-&gt;4)]-N-acetyl-alpha-D-muramoyl-L-alanyl-D-glutamyl-meso-2,6-diaminopimeloyl-D-alanyl-D-alanine + UDP + H(+). It participates in cell wall biogenesis; peptidoglycan biosynthesis. Cell wall formation. Catalyzes the transfer of a GlcNAc subunit on undecaprenyl-pyrophosphoryl-MurNAc-pentapeptide (lipid intermediate I) to form undecaprenyl-pyrophosphoryl-MurNAc-(pentapeptide)GlcNAc (lipid intermediate II). The polypeptide is UDP-N-acetylglucosamine--N-acetylmuramyl-(pentapeptide) pyrophosphoryl-undecaprenol N-acetylglucosamine transferase (Legionella pneumophila (strain Lens)).